A 323-amino-acid polypeptide reads, in one-letter code: Ankyrin repeat and SOCS box protein 11 (323 aa).

ANK repeat units lie at residues 64-93 (ADRSPLHEAAAQGRLLALKTLIAQGVNVNL), 97-126 (NRVSSLHEACLGGHVACAKALLENGAHVNG), 130-159 (HGATPLFNACCSGSAACVNVLLEFGAKAQL), 162-191 (HLASPIHEAVKRGHRECMEILLANNVNIDH), 195-224 (QLGTPLYVACTYQRVDCVKKLLELGASVDH), and 227-256 (WLDTPLHAAARQSNVEVIHLLTDYGANLKR). The 51-residue stretch at 273–323 (SVEQALLLREGPPALSQLCRLCVRKCLGRACHQAIHKLHLPEPLERFLLYQ) folds into the SOCS box domain.

Belongs to the ankyrin SOCS box (ASB) family. As to quaternary structure, substrate-recognition component of the ECS(ASB11) complex, composed of ASB11, CUL5, ELOB, ELOC and RNF7/RBX2.

The protein localises to the endoplasmic reticulum. Its pathway is protein modification; protein ubiquitination. Functionally, substrate-recognition component of a cullin-5-RING E3 ubiquitin-protein ligase complex (ECS complex, also named CRL5 complex), which mediates the ubiquitination and subsequent proteasomal degradation of target proteins, such as BIK, DIRAS2 and RPN1. The ECS(ASB11) complex acts as a regulator of the endoplasmic reticulum unfolded protein response by mediating ubiquitination and degradation of BIK. This Homo sapiens (Human) protein is Ankyrin repeat and SOCS box protein 11.